The primary structure comprises 268 residues: MAELDIGQHCQVQHCRQRDFLPFVCDGCSGIFCLEHRSKDSHGCSEVNVVKERPKTDEHKSYSCSFKGCTDVELVAVICPYCEKNFCLRHRHQSDHDCEKLEVAKPRMAATQKLVRDIVDAKTGGAASKGRKGAKSSGTAAKVALMKLKMHADGDKSLPQTERTYFQVYLPKGSKEKSKAMFFCLRWSIGKVVDFAASLANLRNENNKLTAKKLRLCHVPSGEALPLDHTLERWITKEECPLYNGGNVILEYLNDEEQFLKNVDSYLE.

An N-acetylalanine modification is found at Ala2. AN1-type zinc fingers lie at residues 4 to 52 (LDIG…VVKE) and 58 to 106 (EHKS…VAKP). Positions 10, 15, 25, 28, 33, 36, 42, 44, 64, 69, 79, 82, 87, 90, 96, and 98 each coordinate Zn(2+). The interval 160–260 (QTERTYFQVY…EYLNDEEQFL (101 aa)) is ubiquitin-like.

Associates with the 26S proteasome; this association occurs upon exposure to arsenite and is reduced in the presence of ATP. Interacts (via AN1-type 1 and 2 zinc fingers) with PSMD1; this interaction is increased upon arsenite treatment and occurs in an ATP-independent manner. Interacts with PSMC4. Interacts with PSMA1. Interacts (via its ubiquitin-like region) with VCP; this interaction occurs in an arsenite-dependent manner and is necessary for the recruitment of the ubiquitin-selective ATPase VCP to stress granules (SGs).

The protein localises to the cytoplasm. It localises to the stress granule. In terms of biological role, plays a role in the regulation of cytoplasmic stress granules (SGs) turnover. SGs are dynamic and transient cytoplasmic ribonucleoprotein assemblies important for cellular protein homeostasis when protein production is suspended after acute exogenous stress. Associates with SGs and is involved in the efficient and specific arsenite-induced clearance process of SGs through the recruitment of the ubiquitin-selective ATPase VCP and the 26S proteasome. This process requires both complexes for efficient degradation of damaged ubiquitinated SG proteins during recovery from arsenite stress, and hence avoiding aberrant cytoplasmic SGs degradation via autophagy. This chain is AN1-type zinc finger protein 1, found in Mus musculus (Mouse).